We begin with the raw amino-acid sequence, 150 residues long: D-aminoacyl-tRNA deacylase (150 aa).

The Gly-cisPro motif, important for rejection of L-amino acids motif lies at 138–139; that stretch reads GP.

This sequence belongs to the DTD family. In terms of assembly, homodimer.

Its subcellular location is the cytoplasm. The catalysed reaction is glycyl-tRNA(Ala) + H2O = tRNA(Ala) + glycine + H(+). The enzyme catalyses a D-aminoacyl-tRNA + H2O = a tRNA + a D-alpha-amino acid + H(+). An aminoacyl-tRNA editing enzyme that deacylates mischarged D-aminoacyl-tRNAs. Also deacylates mischarged glycyl-tRNA(Ala), protecting cells against glycine mischarging by AlaRS. Acts via tRNA-based rather than protein-based catalysis; rejects L-amino acids rather than detecting D-amino acids in the active site. By recycling D-aminoacyl-tRNA to D-amino acids and free tRNA molecules, this enzyme counteracts the toxicity associated with the formation of D-aminoacyl-tRNA entities in vivo and helps enforce protein L-homochirality. This Akkermansia muciniphila (strain ATCC BAA-835 / DSM 22959 / JCM 33894 / BCRC 81048 / CCUG 64013 / CIP 107961 / Muc) protein is D-aminoacyl-tRNA deacylase.